The chain runs to 314 residues: Ribosome maturation factor RimP (314 aa).

3 disordered regions span residues 1–20, 152–176, and 206–314; these read MDLD…QPLS, PIEA…AKPE, and AAKA…PAPK. The span at 10–19 shows a compositional bias: polar residues; that stretch reads PSAQVGQQPL. The segment covering 215-227 has biased composition (acidic residues); the sequence is DGNNEEQDEEQEE. A compositionally biased stretch (polar residues) spans 247–256; the sequence is PEHNPAQNPI. Composition is skewed to basic and acidic residues over residues 270 to 279 and 303 to 314; these read TEFKKSKTGE and SGHDMPRKPAPK.

It belongs to the RimP family.

The protein localises to the cytoplasm. Its function is as follows. Required for maturation of 30S ribosomal subunits. The protein is Ribosome maturation factor RimP of Beijerinckia indica subsp. indica (strain ATCC 9039 / DSM 1715 / NCIMB 8712).